The chain runs to 142 residues: MDVKKDENSILENMKQEINHSLKEEAQEEEEILKKRISSHPLYGLLLHSHLNCLKVCSGDFDSPEIMNTADDLALSKLSLHPDSSSEATSSELDQFMVLFFFSPCQNIFTQQKTTFHVLLFFPLQINLTFKYSKFILPRKKQ.

The stretch at 4 to 36 (KKDENSILENMKQEINHSLKEEAQEEEEILKKR) forms a coiled coil.

As to quaternary structure, interacts with KNAT1, KNAT3, KNAT4, BEL1, BLH2, BLH4 and BLH9, but not with BLH8 or the KNATM-A and KNATM-C isoforms. Isoforms KNATM-A and KNATM-C: no interactions with KNATM-B, KNOXX or BELL proteins. Detected in inflorescences, seedlings, leaves, hydathodes, stems, roots, embryo and siliques. Expressed in a polar pattern in organ primordia and at the boundary of mature organs. Detected in the lateral domains of flower meristems, but not in the inflorescence meristem or the vegetative shoot apical meristem.

It localises to the cytoplasm. The protein resides in the nucleus. Functionally, transcriptional regulator involved in leaf proximal/distal patterning. May act by sequestering BELL transcription factors. The sequence is that of Protein KNATM from Arabidopsis thaliana (Mouse-ear cress).